The primary structure comprises 482 residues: Isoxanthopterin deaminase (482 aa).

Zn(2+) is bound by residues His-74 and His-76. Position 79 (Gln-79) interacts with substrate. His-246 contributes to the Zn(2+) binding site. Substrate is bound by residues Glu-249 and His-283. The Zn(2+) site is built by His-283 and Asp-334.

The protein belongs to the metallo-dependent hydrolases superfamily. ATZ/TRZ family. Zn(2+) serves as cofactor.

The enzyme catalyses a 2-amino-4-hydroxypteridine + H2O + H(+) = a 2,4-dihydroxypteridine + NH4(+). The chain is Isoxanthopterin deaminase from Unknown prokaryotic organism.